A 127-amino-acid chain; its full sequence is Small ribosomal subunit protein uS11 (127 aa).

The protein belongs to the universal ribosomal protein uS11 family. In terms of assembly, part of the 30S ribosomal subunit. Interacts with proteins S7 and S18. Binds to IF-3.

Functionally, located on the platform of the 30S subunit, it bridges several disparate RNA helices of the 16S rRNA. Forms part of the Shine-Dalgarno cleft in the 70S ribosome. The sequence is that of Small ribosomal subunit protein uS11 from Chlorobium phaeobacteroides (strain BS1).